The primary structure comprises 161 residues: Ribosome maturation factor RimP (161 aa).

It belongs to the RimP family.

Its subcellular location is the cytoplasm. Required for maturation of 30S ribosomal subunits. In Myxococcus xanthus (strain DK1622), this protein is Ribosome maturation factor RimP.